The chain runs to 629 residues: tRNA uridine 5-carboxymethylaminomethyl modification enzyme MnmG (629 aa).

Residues 15–20 (GAGHAG), Val127, and Ser182 contribute to the FAD site. A disordered region spans residues 203–227 (TPPRVKSSTIDYSKTEEQPGDDHPR). Residues 215-227 (SKTEEQPGDDHPR) show a composition bias toward basic and acidic residues. 274-288 (GARYCPSIEDKIVRF) serves as a coordination point for NAD(+). Gln371 provides a ligand contact to FAD.

The protein belongs to the MnmG family. In terms of assembly, homodimer. Heterotetramer of two MnmE and two MnmG subunits. FAD serves as cofactor.

It localises to the cytoplasm. Its function is as follows. NAD-binding protein involved in the addition of a carboxymethylaminomethyl (cmnm) group at the wobble position (U34) of certain tRNAs, forming tRNA-cmnm(5)s(2)U34. The polypeptide is tRNA uridine 5-carboxymethylaminomethyl modification enzyme MnmG (Listeria welshimeri serovar 6b (strain ATCC 35897 / DSM 20650 / CCUG 15529 / CIP 8149 / NCTC 11857 / SLCC 5334 / V8)).